Reading from the N-terminus, the 381-residue chain is MKLIVAGGGTGGHLFPGIAVAEEFLSRDPANQVLFVGSERGIEARAIPRLGYQLELISAAGIRGKGSLAKLKGAAMMIYGYAQSRKILHRFQPDLVLGVGGYASLPMVMAARGMEIPRYIHEQNALPGMSNKVLSRVANKVFISLEESAKFFPKDCTLLTGNPLRKQILEMLTQTETENPPSIPPLLKGGSEPCEQRGFNLFIFGGSQGAHALNVALPQAVAQLSPKQQRLIKIIHQTGEADLQQVQAAYQANGLEADVRPFIDDMATAYRQADLIICRAGATTIAEVTALGKACLFVPFPHATDDHQRKNAEALLKKGACEMLVEQEIGGKGLSEAIARLMENRDALKLIGENAAALARLDAARVIVDQMLEGVQPCTET.

UDP-N-acetyl-alpha-D-glucosamine contacts are provided by residues 10-12, Asn124, Arg165, Ser207, Ile263, and Gln308; that span reads TGG.

The protein belongs to the glycosyltransferase 28 family. MurG subfamily.

It is found in the cell inner membrane. The enzyme catalyses di-trans,octa-cis-undecaprenyl diphospho-N-acetyl-alpha-D-muramoyl-L-alanyl-D-glutamyl-meso-2,6-diaminopimeloyl-D-alanyl-D-alanine + UDP-N-acetyl-alpha-D-glucosamine = di-trans,octa-cis-undecaprenyl diphospho-[N-acetyl-alpha-D-glucosaminyl-(1-&gt;4)]-N-acetyl-alpha-D-muramoyl-L-alanyl-D-glutamyl-meso-2,6-diaminopimeloyl-D-alanyl-D-alanine + UDP + H(+). Its pathway is cell wall biogenesis; peptidoglycan biosynthesis. Functionally, cell wall formation. Catalyzes the transfer of a GlcNAc subunit on undecaprenyl-pyrophosphoryl-MurNAc-pentapeptide (lipid intermediate I) to form undecaprenyl-pyrophosphoryl-MurNAc-(pentapeptide)GlcNAc (lipid intermediate II). This Trichlorobacter lovleyi (strain ATCC BAA-1151 / DSM 17278 / SZ) (Geobacter lovleyi) protein is UDP-N-acetylglucosamine--N-acetylmuramyl-(pentapeptide) pyrophosphoryl-undecaprenol N-acetylglucosamine transferase.